The following is a 399-amino-acid chain: Tryptophan synthase beta chain (399 aa).

Residue K92 is modified to N6-(pyridoxal phosphate)lysine.

This sequence belongs to the TrpB family. As to quaternary structure, tetramer of two alpha and two beta chains. Pyridoxal 5'-phosphate serves as cofactor.

The enzyme catalyses (1S,2R)-1-C-(indol-3-yl)glycerol 3-phosphate + L-serine = D-glyceraldehyde 3-phosphate + L-tryptophan + H2O. It participates in amino-acid biosynthesis; L-tryptophan biosynthesis; L-tryptophan from chorismate: step 5/5. The beta subunit is responsible for the synthesis of L-tryptophan from indole and L-serine. The polypeptide is Tryptophan synthase beta chain (Legionella pneumophila (strain Corby)).